Here is a 580-residue protein sequence, read N- to C-terminus: tRNA-guanine(15) transglycosylase (580 aa).

Aspartate 91 serves as the catalytic Nucleophile. Substrate contacts are provided by aspartate 126 and alanine 192. Positions 275, 277, and 280 each coordinate Zn(2+). Residues 504–579 form the PUA domain; it reads RMRVVVDEDA…LAVKVRRGVE (76 aa).

The protein belongs to the archaeosine tRNA-ribosyltransferase family. Zn(2+) serves as cofactor.

It catalyses the reaction guanosine(15) in tRNA + 7-cyano-7-deazaguanine = 7-cyano-7-carbaguanosine(15) in tRNA + guanine. It participates in tRNA modification; archaeosine-tRNA biosynthesis. In terms of biological role, exchanges the guanine residue with 7-cyano-7-deazaguanine (preQ0) at position 15 in the dihydrouridine loop (D-loop) of archaeal tRNAs. The polypeptide is tRNA-guanine(15) transglycosylase (Thermococcus onnurineus (strain NA1)).